A 282-amino-acid chain; its full sequence is Pantothenate synthetase (282 aa).

Residue 30–37 participates in ATP binding; that stretch reads MGFLHDGH. His37 functions as the Proton donor in the catalytic mechanism. Gln60 contributes to the (R)-pantoate binding site. Gln60 is a binding site for beta-alanine. 146 to 149 is a binding site for ATP; it reads GQKD. Residue Gln152 participates in (R)-pantoate binding. ATP is bound by residues Ile175 and 183-186; that span reads KSSR.

This sequence belongs to the pantothenate synthetase family. As to quaternary structure, homodimer.

The protein resides in the cytoplasm. The enzyme catalyses (R)-pantoate + beta-alanine + ATP = (R)-pantothenate + AMP + diphosphate + H(+). Its pathway is cofactor biosynthesis; (R)-pantothenate biosynthesis; (R)-pantothenate from (R)-pantoate and beta-alanine: step 1/1. Catalyzes the condensation of pantoate with beta-alanine in an ATP-dependent reaction via a pantoyl-adenylate intermediate. The protein is Pantothenate synthetase of Campylobacter jejuni subsp. jejuni serotype O:6 (strain 81116 / NCTC 11828).